Consider the following 660-residue polypeptide: MKAVVFAYHDIGCAGINALVAAGYDITAIYTHPDAPSENHFFGSVARTAAEHGIPVYAPNDVNHPLWIDRIKSAQPDVIFSFYYRNLLCDEILNSATVGAFNLHGSLLPHYRGRAPLNWVLVKGETETGVTLHKMVSRADAGAIVAQHRVAIAPEETALTLHHKLTQASSDLLKDILPVIKTGHFPEVEQDHSQASIFGRRTAQDGCIDWHATAQEISNLVRAVTDPWPGAFGYVGGSKFIVWKARALEGLQAAKAGTVLSVSPLVIATGGGALEIMTGQTENGVYMQGSQLAQTLGLVAGAIISSQPVSAIKRRTRVLILGVNGFIGNHLTERLLQDDNFEVYGLDIGSDAISRFIGNSRFHFVEGDISIHSEWIEYHIKKCDVVLPLVAIATPIEYTRNPLRVFELDFEENLKIIRDCVKYQKRIIFPSTSEVYGMCSDKVFDEDHSNLIVGPINKQRWIYSVSKQLLDRVIWAYGEKEGLRFTLFRPFNWMGPRLDNLNAARIGSSRAITQLILNLVEGSPIKLIDGGRQKRCFTDISDGIEALFRIIENKNSNCDGQIINIGNPDNEASIKELAEMLLASFEKHPLRNHFPPFAGFREVESSTYYGKGYQDVEHRKPSIRNAHRLISWTPTVEMEKTIDETLDFFLKTVELTEPQA.

The segment at 1–304 is formyltransferase ArnAFT; the sequence is MKAVVFAYHD…TLGLVAGAII (304 aa). The active-site Proton donor; for formyltransferase activity is His104. Residues Arg114 and 136-140 each bind (6R)-10-formyltetrahydrofolate; that span reads VSRAD. Residues 314–660 form a dehydrogenase ArnADH region; the sequence is RRTRVLILGV…KTVELTEPQA (347 aa). NAD(+)-binding positions include Asp347 and 368–369; that span reads DI. UDP-alpha-D-glucuronate-binding positions include Ala393, Tyr398, and 432 to 433; that span reads TS. The active-site Proton acceptor; for decarboxylase activity is the Glu434. Residues Arg460, Asn492, 526–535, and Tyr613 each bind UDP-alpha-D-glucuronate; that span reads KLIDGGRQKR. Arg619 (proton donor; for decarboxylase activity) is an active-site residue.

In the N-terminal section; belongs to the Fmt family. UDP-L-Ara4N formyltransferase subfamily. This sequence in the C-terminal section; belongs to the NAD(P)-dependent epimerase/dehydratase family. UDP-glucuronic acid decarboxylase subfamily. As to quaternary structure, homohexamer, formed by a dimer of trimers.

The enzyme catalyses UDP-alpha-D-glucuronate + NAD(+) = UDP-beta-L-threo-pentopyranos-4-ulose + CO2 + NADH. The catalysed reaction is UDP-4-amino-4-deoxy-beta-L-arabinose + (6R)-10-formyltetrahydrofolate = UDP-4-deoxy-4-formamido-beta-L-arabinose + (6S)-5,6,7,8-tetrahydrofolate + H(+). It participates in nucleotide-sugar biosynthesis; UDP-4-deoxy-4-formamido-beta-L-arabinose biosynthesis; UDP-4-deoxy-4-formamido-beta-L-arabinose from UDP-alpha-D-glucuronate: step 1/3. The protein operates within nucleotide-sugar biosynthesis; UDP-4-deoxy-4-formamido-beta-L-arabinose biosynthesis; UDP-4-deoxy-4-formamido-beta-L-arabinose from UDP-alpha-D-glucuronate: step 3/3. It functions in the pathway bacterial outer membrane biogenesis; lipopolysaccharide biosynthesis. Functionally, bifunctional enzyme that catalyzes the oxidative decarboxylation of UDP-glucuronic acid (UDP-GlcUA) to UDP-4-keto-arabinose (UDP-Ara4O) and the addition of a formyl group to UDP-4-amino-4-deoxy-L-arabinose (UDP-L-Ara4N) to form UDP-L-4-formamido-arabinose (UDP-L-Ara4FN). The modified arabinose is attached to lipid A and is required for resistance to polymyxin and cationic antimicrobial peptides. The protein is Bifunctional polymyxin resistance protein ArnA of Enterobacter sp. (strain 638).